The sequence spans 364 residues: 4-hydroxythreonine-4-phosphate dehydrogenase (364 aa).

2 residues coordinate substrate: H148 and T149. Residues H177, H216, and H301 each contribute to the a divalent metal cation site. 3 residues coordinate substrate: K309, N318, and R327.

Belongs to the PdxA family. As to quaternary structure, homodimer. Zn(2+) is required as a cofactor. Requires Mg(2+) as cofactor. Co(2+) serves as cofactor.

Its subcellular location is the cytoplasm. It catalyses the reaction 4-(phosphooxy)-L-threonine + NAD(+) = 3-amino-2-oxopropyl phosphate + CO2 + NADH. It participates in cofactor biosynthesis; pyridoxine 5'-phosphate biosynthesis; pyridoxine 5'-phosphate from D-erythrose 4-phosphate: step 4/5. Catalyzes the NAD(P)-dependent oxidation of 4-(phosphooxy)-L-threonine (HTP) into 2-amino-3-oxo-4-(phosphooxy)butyric acid which spontaneously decarboxylates to form 3-amino-2-oxopropyl phosphate (AHAP). The polypeptide is 4-hydroxythreonine-4-phosphate dehydrogenase (Campylobacter jejuni subsp. jejuni serotype O:23/36 (strain 81-176)).